A 234-amino-acid polypeptide reads, in one-letter code: Glycerol uptake facilitator protein (234 aa).

6 consecutive transmembrane segments (helical) span residues 9–29 (FLGT…VVLP), 37–57 (GWIV…FVSG), 61–81 (PAYL…LPWA), 83–103 (VLPY…LVWL), 135–155 (LISE…LGLY), and 159–179 (AGIG…SLGG). The NPA 1 signature appears at 65 to 67 (NPA). Residues 186-188 (NPA) carry the NPA 2 motif. Residues 214–234 (WIPVVGPVIGAALAVLVFSLF) traverse the membrane as a helical segment.

It belongs to the MIP/aquaporin (TC 1.A.8) family.

The protein localises to the cell membrane. It catalyses the reaction glycerol(in) = glycerol(out). In terms of biological role, mediates glycerol diffusion across the cytoplasmic membrane via a pore-type mechanism. The protein is Glycerol uptake facilitator protein (glpF) of Streptococcus pneumoniae serotype 4 (strain ATCC BAA-334 / TIGR4).